Reading from the N-terminus, the 233-residue chain is Lipoprotein-releasing system ATP-binding protein LolD (233 aa).

The region spanning 7–233 (IHCEKLSKTY…QLQSESERNH (227 aa)) is the ABC transporter domain. Residue 43–50 (GASGAGKS) coordinates ATP.

The protein belongs to the ABC transporter superfamily. Lipoprotein translocase (TC 3.A.1.125) family. The complex is composed of two ATP-binding proteins (LolD) and two transmembrane proteins (LolC and LolE).

It is found in the cell inner membrane. Its function is as follows. Part of the ABC transporter complex LolCDE involved in the translocation of mature outer membrane-directed lipoproteins, from the inner membrane to the periplasmic chaperone, LolA. Responsible for the formation of the LolA-lipoprotein complex in an ATP-dependent manner. In Coxiella burnetii (strain RSA 493 / Nine Mile phase I), this protein is Lipoprotein-releasing system ATP-binding protein LolD.